Reading from the N-terminus, the 113-residue chain is Integration host factor subunit alpha (113 aa).

This sequence belongs to the bacterial histone-like protein family. Heterodimer of an alpha and a beta chain.

In terms of biological role, this protein is one of the two subunits of integration host factor, a specific DNA-binding protein that functions in genetic recombination as well as in transcriptional and translational control. This is Integration host factor subunit alpha from Rhodopseudomonas palustris (strain BisA53).